Reading from the N-terminus, the 125-residue chain is Phosphoribosyl-AMP cyclohydrolase (125 aa).

D74 contacts Mg(2+). C75 contributes to the Zn(2+) binding site. D76 and D78 together coordinate Mg(2+). C92 and C99 together coordinate Zn(2+).

This sequence belongs to the PRA-CH family. Homodimer. The cofactor is Mg(2+). It depends on Zn(2+) as a cofactor.

The protein resides in the cytoplasm. It carries out the reaction 1-(5-phospho-beta-D-ribosyl)-5'-AMP + H2O = 1-(5-phospho-beta-D-ribosyl)-5-[(5-phospho-beta-D-ribosylamino)methylideneamino]imidazole-4-carboxamide. The protein operates within amino-acid biosynthesis; L-histidine biosynthesis; L-histidine from 5-phospho-alpha-D-ribose 1-diphosphate: step 3/9. Its function is as follows. Catalyzes the hydrolysis of the adenine ring of phosphoribosyl-AMP. The polypeptide is Phosphoribosyl-AMP cyclohydrolase (Geotalea uraniireducens (strain Rf4) (Geobacter uraniireducens)).